Here is a 258-residue protein sequence, read N- to C-terminus: Gamma carbonic anhydrase 3, mitochondrial (258 aa).

Residues 1–43 constitute a mitochondrion transit peptide; the sequence is MGTMGKAFYSVGFWIRETGQALDRLGCRLQGKNHFREQLSRHR. Substrate-binding positions include 86-88 and 101-102; these read RGD and QD. Zn(2+) is bound by residues H107, H130, and H135. N209 provides a ligand contact to substrate.

The protein belongs to the gamma-class carbonic anhydrase family. In terms of assembly, homotrimer. Component of the oxidoreductase respiratory chain complex I; element of the extra matrix-exposed domain, which is attached to the membrane arm of this complex. Zn(2+) serves as cofactor.

It localises to the mitochondrion membrane. Its function is as follows. Enzyme involved in the catabolism of H(2)CO(3) but that does not mediates the reversible hydration of carbon dioxide. Mediates complex I assembly in mitochondria and respiration. The protein is Gamma carbonic anhydrase 3, mitochondrial (GAMMACA3) of Arabidopsis thaliana (Mouse-ear cress).